We begin with the raw amino-acid sequence, 167 residues long: Mediator of RNA polymerase II transcription subunit 10 (167 aa).

Residues 54–92 form a disordered region; sequence STHTKPHPPPPPPPQPTDPTTAAAPALRDNPDPPLSSIQ. Positions 60 to 70 are enriched in pro residues; that stretch reads HPPPPPPPQPT.

It belongs to the Mediator complex subunit 10 family. In terms of assembly, component of the Mediator complex.

The protein resides in the nucleus. Functionally, component of the Mediator complex, a coactivator involved in the regulated transcription of nearly all RNA polymerase II-dependent genes. Mediator functions as a bridge to convey information from gene-specific regulatory proteins to the basal RNA polymerase II transcription machinery. Mediator is recruited to promoters by direct interactions with regulatory proteins and serves as a scaffold for the assembly of a functional preinitiation complex with RNA polymerase II and the general transcription factors. The chain is Mediator of RNA polymerase II transcription subunit 10 (nut2) from Aspergillus clavatus (strain ATCC 1007 / CBS 513.65 / DSM 816 / NCTC 3887 / NRRL 1 / QM 1276 / 107).